The primary structure comprises 534 residues: Major facilitator-type transporter sor6 (534 aa).

Residues Asn-29 and Asn-36 are each glycosylated (N-linked (GlcNAc...) asparagine). Helical transmembrane passes span Trp-66–Tyr-86, Leu-103–Gly-123, Ala-160–Leu-180, Phe-182–Leu-202, Gly-209–Val-229, Trp-241–Val-261, Ile-318–Gly-338, Phe-354–Ile-374, Leu-395–Thr-415, Val-424–Val-444, Ala-456–Phe-476, and Ile-486–Phe-506.

Belongs to the major facilitator superfamily. Sugar transporter (TC 2.A.1.1) family.

It is found in the membrane. Major facilitator-type transporter; part of the gene cluster that mediates the biosynthesis of sorbicillinoids, a diverse group of yellow secondary metabolites that restrict growth of competing pathogenic fungi but not of bacteria. The sequence is that of Major facilitator-type transporter sor6 from Hypocrea jecorina (strain QM6a) (Trichoderma reesei).